Reading from the N-terminus, the 457-residue chain is Transcription termination factor Rho (457 aa).

Residues 1 to 23 (MNTTNKQLTEELNNTESNNDHND) form a disordered region. The Rho RNA-BD domain occupies 77–152 (LIVGEGVLEV…LKVNRVNFED (76 aa)). ATP-binding positions include 200–205 (GKGQRA), 212–217 (RTGKTV), and arginine 243.

It belongs to the Rho family. In terms of assembly, homohexamer. The homohexamer assembles into an open ring structure.

Functionally, facilitates transcription termination by a mechanism that involves Rho binding to the nascent RNA, activation of Rho's RNA-dependent ATPase activity, and release of the mRNA from the DNA template. The chain is Transcription termination factor Rho from Rickettsia prowazekii (strain Madrid E).